Here is a 528-residue protein sequence, read N- to C-terminus: Na(+)/H(+) antiporter NhaB (528 aa).

10 helical membrane passes run 25 to 47, 66 to 86, 97 to 117, 130 to 164, 241 to 261, 304 to 324, 351 to 371, 390 to 410, 448 to 468, and 476 to 496; these read IISFLVINPIVFYFNPFIAGWLL, PGGLLAIEAVAIGMTSPSQVL, LLLVFMVAGIYFMKQLLLFVF, VSLLFCVSSAFLSAFLDALTVIAVIITVAVGFYSI, IRMSPVTVPVFFAGVTTCFLV, AFIGVWLIAGLALHLASVGLI, ALPFTALLAVFFAIVAVIIDL, LVVFYIANGLLSMVSDNVFVG, ATPNGQAAFLFLLTSAIAPLI, and VWMALPYTIVLSIVGVLAIQL.

The protein belongs to the NhaB Na(+)/H(+) (TC 2.A.34) antiporter family.

The protein localises to the cell inner membrane. It catalyses the reaction 2 Na(+)(in) + 3 H(+)(out) = 2 Na(+)(out) + 3 H(+)(in). Na(+)/H(+) antiporter that extrudes sodium in exchange for external protons. The protein is Na(+)/H(+) antiporter NhaB of Shewanella halifaxensis (strain HAW-EB4).